The sequence spans 101 residues: MPVEPLSQKEIEDRLAELPGWSLDGDRISRSYRLGSHFAAAAMVVHIAQVQEELDHHSDLTLSYHTVSLTVNTHSVGGAVTELDFALARRVEDLAPGHGAS.

It belongs to the pterin-4-alpha-carbinolamine dehydratase family.

It carries out the reaction (4aS,6R)-4a-hydroxy-L-erythro-5,6,7,8-tetrahydrobiopterin = (6R)-L-erythro-6,7-dihydrobiopterin + H2O. This is Putative pterin-4-alpha-carbinolamine dehydratase (dcoH) from Streptomyces avermitilis (strain ATCC 31267 / DSM 46492 / JCM 5070 / NBRC 14893 / NCIMB 12804 / NRRL 8165 / MA-4680).